Consider the following 238-residue polypeptide: Hydroxyacylglutathione hydrolase (238 aa).

7 residues coordinate Zn(2+): His-52, His-54, Asp-56, His-57, His-108, Asp-125, and His-163.

The protein belongs to the metallo-beta-lactamase superfamily. Glyoxalase II family. As to quaternary structure, monomer. The cofactor is Zn(2+).

It catalyses the reaction an S-(2-hydroxyacyl)glutathione + H2O = a 2-hydroxy carboxylate + glutathione + H(+). It participates in secondary metabolite metabolism; methylglyoxal degradation; (R)-lactate from methylglyoxal: step 2/2. In terms of biological role, thiolesterase that catalyzes the hydrolysis of S-D-lactoyl-glutathione to form glutathione and D-lactic acid. The protein is Hydroxyacylglutathione hydrolase of Haemophilus influenzae (strain ATCC 51907 / DSM 11121 / KW20 / Rd).